An 87-amino-acid polypeptide reads, in one-letter code: Large ribosomal subunit protein bL28 (87 aa).

It belongs to the bacterial ribosomal protein bL28 family.

The protein is Large ribosomal subunit protein bL28 of Methylacidiphilum infernorum (isolate V4) (Methylokorus infernorum (strain V4)).